A 188-amino-acid polypeptide reads, in one-letter code: Ribosomal RNA small subunit methyltransferase G (188 aa).

Residues G69, F74, 119-120 (VQ), and R134 contribute to the S-adenosyl-L-methionine site.

It belongs to the methyltransferase superfamily. RNA methyltransferase RsmG family.

The protein localises to the cytoplasm. It carries out the reaction guanosine(527) in 16S rRNA + S-adenosyl-L-methionine = N(7)-methylguanosine(527) in 16S rRNA + S-adenosyl-L-homocysteine. Functionally, specifically methylates the N7 position of guanine in position 527 of 16S rRNA. This chain is Ribosomal RNA small subunit methyltransferase G, found in Campylobacter jejuni subsp. jejuni serotype O:23/36 (strain 81-176).